The primary structure comprises 1439 residues: Histone-lysine N-methyltransferase NSD3 (1439 aa).

A disordered region spans residues 121–151 (PHEILEKPSPPQPPPPPSVPQTVIPKKTGSP). Over residues 128 to 139 (PSPPQPPPPPSV) the composition is skewed to pro residues. At Ser-150 the chain carries Phosphoserine. The short motif at 154 to 157 (KLKI) is the KIKL element. Residues 181–247 (QASEHTKSKH…PREEPVLKEA (67 aa)) form a disordered region. The span at 187–201 (KSKHESRKEKRKKSN) shows a compositional bias: basic residues. The segment covering 202–244 (RHESSRSEERRSHKIPKLEPEGQNRPNERVDTAPEKPREEPVL) has biased composition (basic and acidic residues). Glycyl lysine isopeptide (Lys-Gly) (interchain with G-Cter in SUMO2) cross-links involve residues Lys-218 and Lys-245. The PWWP 1 domain occupies 270-333 (VGDLVWSKVG…EKRVREYKGH (64 aa)). Disordered regions lie at residues 344-367 (AKQA…ERAQ) and 401-466 (EASS…PPPV). Composition is skewed to polar residues over residues 401–413 (EASS…VTSK) and 425–445 (VLNS…QSST). A Glycyl lysine isopeptide (Lys-Gly) (interchain with G-Cter in SUMO2) cross-link involves residue Lys-413. Ser-457 carries the post-translational modification Phosphoserine. Residues Lys-502 and Lys-532 each participate in a glycyl lysine isopeptide (Lys-Gly) (interchain with G-Cter in SUMO2) cross-link. Residues 540–695 (QDRLIISSPS…VDSSLSRRGV (156 aa)) are disordered. Residues 546–568 (SSPSQRSEKPAQSASSPEATSGS) show a composition bias toward polar residues. A compositionally biased stretch (basic and acidic residues) spans 583 to 595 (TRSESEKSAEVVP). Ser-585, Ser-587, and Ser-590 each carry phosphoserine. Lys-628 participates in a covalent cross-link: Glycyl lysine isopeptide (Lys-Gly) (interchain with G-Cter in SUMO2). Over residues 637-648 (STDVETASCTYR) the composition is skewed to polar residues. Position 655 is a phosphoserine (Ser-655). Positions 670 to 691 (DSPSATADADASDAQSVDSSLS) are enriched in low complexity. PHD-type zinc fingers lie at residues 701–748 (DTVC…CETG), 749–805 (QHPC…CSME), and 862–955 (VGFC…CKAG). Residue Lys-790 is modified to N6-acetyllysine. The region spanning 960-1025 (YKQIVWVKLG…QGRVFPYVEG (66 aa)) is the PWWP 2 domain. Positions 1036-1065 (INKTFKKALEEAAKRFQELKAQRESKEALE) form a coiled coil. An AWS domain is found at 1096-1146 (SEIPRCNCKPGDENPCGLESQCLNRMSQYECHPQVCPAGDRCQNQCFTKRL). In terms of domain architecture, SET spans 1148-1265 (PDAEVIKTER…AGMELTFNYN (118 aa)). A Glycyl lysine isopeptide (Lys-Gly) (interchain with G-Cter in SUMO2) cross-link involves residue Lys-1154. One can recognise a Post-SET domain in the interval 1272–1288 (GRTVCHCGADNCSGFLG). A PHD-type 4; atypical zinc finger spans residues 1323 to 1370 (EDYCFQCGDGGELVMCDKKDCPKAYHLLCLNLTQPPHGKWECPWHRCD).

The protein belongs to the class V-like SAM-binding methyltransferase superfamily. Histone-lysine methyltransferase family. SET2 subfamily. As to quaternary structure, interacts with BRD4. Interacts (via KIKL motif) with BRD3 (via NET domain).

It is found in the nucleus. Its subcellular location is the chromosome. The catalysed reaction is L-lysyl(4)-[histone H3] + 2 S-adenosyl-L-methionine = N(6),N(6)-dimethyl-L-lysyl(4)-[histone H3] + 2 S-adenosyl-L-homocysteine + 2 H(+). The enzyme catalyses L-lysyl(27)-[histone H3] + 2 S-adenosyl-L-methionine = N(6),N(6)-dimethyl-L-lysyl(27)-[histone H3] + 2 S-adenosyl-L-homocysteine + 2 H(+). In terms of biological role, histone methyltransferase. Preferentially dimethylates 'Lys-4' and 'Lys-27' of histone H3 forming H3K4me2 and H3K27me2. H3 'Lys-4' methylation represents a specific tag for epigenetic transcriptional activation, while 'Lys-27' is a mark for transcriptional repression. This is Histone-lysine N-methyltransferase NSD3 (Nsd3) from Mus musculus (Mouse).